Here is a 263-residue protein sequence, read N- to C-terminus: Sulfur carrier protein FdhD (263 aa).

C107 functions as the Cysteine persulfide intermediate in the catalytic mechanism.

It belongs to the FdhD family.

Its subcellular location is the cytoplasm. Its function is as follows. Required for formate dehydrogenase (FDH) activity. Acts as a sulfur carrier protein that transfers sulfur from IscS to the molybdenum cofactor prior to its insertion into FDH. The sequence is that of Sulfur carrier protein FdhD from Bacillus licheniformis (strain ATCC 14580 / DSM 13 / JCM 2505 / CCUG 7422 / NBRC 12200 / NCIMB 9375 / NCTC 10341 / NRRL NRS-1264 / Gibson 46).